Reading from the N-terminus, the 261-residue chain is uncharacterized protein (261 aa).

A signal peptide spans 1 to 22; that stretch reads MIHSKKLTLGICLVLLIILIGG. The N-palmitoyl cysteine moiety is linked to residue cysteine 23. Residue cysteine 23 is the site of S-diacylglycerol cysteine attachment.

It belongs to the staphylococcal tandem lipoprotein family.

The protein localises to the cell membrane. This is an uncharacterized protein from Staphylococcus aureus (strain USA300).